The chain runs to 406 residues: ATP phosphoribosyltransferase regulatory subunit (406 aa).

This sequence belongs to the class-II aminoacyl-tRNA synthetase family. HisZ subfamily. In terms of assembly, heteromultimer composed of HisG and HisZ subunits.

It is found in the cytoplasm. It functions in the pathway amino-acid biosynthesis; L-histidine biosynthesis; L-histidine from 5-phospho-alpha-D-ribose 1-diphosphate: step 1/9. Functionally, required for the first step of histidine biosynthesis. May allow the feedback regulation of ATP phosphoribosyltransferase activity by histidine. In Methylococcus capsulatus (strain ATCC 33009 / NCIMB 11132 / Bath), this protein is ATP phosphoribosyltransferase regulatory subunit.